Consider the following 311-residue polypeptide: Thioredoxin reductase (311 aa).

FAD contacts are provided by residues 15-18 (SGPA), 37-44 (EGTQFGGA), Asn-53, and Val-86. Cys-137 and Cys-140 are disulfide-bonded. Residues Ser-158, His-177, Arg-183, Ile-240, and Tyr-260 each coordinate NADP(+). FAD contacts are provided by residues Asp-280 and 287 to 290 (RQAI). Arg-287 contributes to the NADP(+) binding site.

It belongs to the class-II pyridine nucleotide-disulfide oxidoreductase family. As to quaternary structure, homodimer. FAD is required as a cofactor.

It localises to the cytoplasm. It catalyses the reaction [thioredoxin]-dithiol + NADP(+) = [thioredoxin]-disulfide + NADPH + H(+). The chain is Thioredoxin reductase from Mycolicibacterium smegmatis (Mycobacterium smegmatis).